Reading from the N-terminus, the 375-residue chain is Killer cell immunoglobulin-like receptor 2DL5A (375 aa).

Residues 1–21 form the signal peptide; sequence MSLMVISMACVGFFLLQGAWT. The Extracellular portion of the chain corresponds to 22–238; it reads HEGGQDKPLL…PSSKTGIRRH (217 aa). Ig-like C2-type domains follow at residues 42 to 102 and 137 to 200; these read GGHV…HPRS and GENV…LHDS. Residues Cys-49 and Cys-95 are joined by a disulfide bond. Asn-139, Asn-173, and Asn-218 each carry an N-linked (GlcNAc...) asparagine glycan. Cys-144 and Cys-193 are joined by a disulfide. The interval 213 to 233 is disordered; that stretch reads VSVTGNSSSSSSSPTEPSSKT. Residues 219–231 are compositionally biased toward low complexity; the sequence is SSSSSSSPTEPSS. Residues 239–259 traverse the membrane as a helical segment; the sequence is LHILIGTSVAIILFIILFFFL. At 260-375 the chain is on the cytoplasmic side; it reads LHCCCSNKKN…ASSHVPAAGI (116 aa). The interval 334-375 is disordered; it reads AKPRSLSPAHKHHSQALRGSSRETTALSQNRVASSHVPAAGI. Over residues 355 to 366 the composition is skewed to polar residues; it reads RETTALSQNRVA.

It belongs to the immunoglobulin superfamily.

Its subcellular location is the cell membrane. Receptor on natural killer (NK) cells for HLA-C alleles. Inhibits the activity of NK cells thus preventing cell lysis. This Homo sapiens (Human) protein is Killer cell immunoglobulin-like receptor 2DL5A (KIR2DL5A).